The sequence spans 2544 residues: DNA polymerase theta (2544 aa).

Positions 1–13 (MSLPRRSRKRRRS) are enriched in basic residues. The tract at residues 1-57 (MSLPRRSRKRRRSSSGSDTFSGDGDSFVSPQLRCGPVLSPPPGLGRGRRLTGTGTNK) is disordered. Residues 14-29 (SSGSDTFSGDGDSFVS) are compositionally biased toward low complexity. Residues Q95 and 114–121 (APTSAGKT) contribute to the ATP site. A Helicase ATP-binding domain is found at 101 to 285 (LGHVLEGKNL…WLNAELYHTD (185 aa)). The tract at residues 101-551 (LGHVLEGKNL…STSQDMQTYA (451 aa)) is helicase activity. The DEAH box signature appears at 215–218 (DELH). Residues 320–551 (GDEDHIVSLC…STSQDMQTYA (232 aa)) form the Helicase C-terminal domain. The interval 844–890 (DEEEEAAEERRSMRTIWVTGKGLSAREAAALIVEEAKMILQQDLIEM) is interaction with RAD51. The interval 896 to 955 (PKSPLSSSTHSRTSTSEVKEHTFKSQTKSSHKRLASMGRNSIRASGSNDKPSPDAERGID) is disordered. Positions 898 to 911 (SPLSSSTHSRTSTS) are enriched in low complexity. Over residues 933 to 945 (GRNSIRASGSNDK) the composition is skewed to polar residues. The segment covering 946 to 955 (PSPDAERGID) has biased composition (basic and acidic residues). Residue K983 is modified to N6-acetyllysine. The segment covering 1022 to 1034 (LSFSSEQVNNTLP) has biased composition (polar residues). 2 disordered regions span residues 1022–1058 (LSFS…GMHR) and 1128–1167 (VGHP…ESQL). Over residues 1128–1139 (VGHPAAGSSPAA) the composition is skewed to low complexity. Residues 1140–1155 (ARDRRGLAARETEKGN) show a composition bias toward basic and acidic residues. S1265 is subject to Phosphoserine. Disordered regions lie at residues 1266-1288 (GVQG…SNPA) and 1331-1353 (QNKC…DHVD). S1438, S1442, S1444, and S1449 each carry phosphoserine. A disordered region spans residues 1478-1501 (FSNPPHPQEDPVMTPTVSEPQGTQ). Residues 1492-1501 (PTVSEPQGTQ) show a composition bias toward polar residues. A phosphoserine mark is found at S1511, S1519, S1585, and S1592. Residues 1557-1591 (ECPQGKLVRGDQNEGSPKPKLTETNQDNSFTWSGA) form a disordered region. The span at 1578–1591 (TETNQDNSFTWSGA) shows a compositional bias: polar residues. 2 stretches are compositionally biased toward basic and acidic residues: residues 1606–1616 (VSSPRENEKPK) and 1628–1638 (NSKESHEREEI). Residues 1606-1697 (VSSPRENEKP…GLIPPTPVPA (92 aa)) are disordered. Positions 1641–1652 (DLGTVQRTSVFP) are enriched in polar residues. Residues 1656 to 1667 (VKNRTEGLESKA) are compositionally biased toward basic and acidic residues. At T1710 the chain carries Phosphothreonine. A DNA polymerase activity region spans residues 2052–2538 (AECESQKHVM…KVKIGASWGE (487 aa)). 2 loop regions span residues 2097 to 2132 (KLPP…GRQF) and 2212 to 2276 (EIKM…VPFP). Over residues 2104-2117 (MKTQGSKKTLGSTR) the composition is skewed to polar residues. The interval 2104–2124 (MKTQGSKKTLGSTRRGNESGR) is disordered. D2284 (for DNA polymerase activity) is an active-site residue. Mg(2+) is bound by residues D2284 and Y2285. A loop 3 region spans residues 2445–2489 (QLETFRSTFKSHGHRESMLQNDRTGLLPKRKLKGMFCPMRGGFFI). D2494 serves as a coordination point for Mg(2+).

This sequence belongs to the DNA polymerase type-A family. Homomultimer; forms homodimers and homotetramers. Interacts with RAD51. Interacts with ORC2 and ORC4. Interacts with RHNO1; interaction takes place during mitosis and promotes POLQ recruitment to DNA damage sites. Interacts (when phosphorylated) with TOPBP1 (via BRCT domains 7 and 8); promoting POLQ recruitment to DNA damage sites. Mg(2+) is required as a cofactor. Post-translationally, phosphorylated by PLK1; promoting interaction with TOPBP1 and recruitment to DNA damage sites.

The protein resides in the nucleus. Its subcellular location is the chromosome. The catalysed reaction is DNA(n) + a 2'-deoxyribonucleoside 5'-triphosphate = DNA(n+1) + diphosphate. It catalyses the reaction ATP + H2O = ADP + phosphate + H(+). Functionally, low-fidelity DNA polymerase with a helicase activity that promotes microhomology-mediated end-joining (MMEJ), an alternative non-homologous end-joining (NHEJ) machinery required to repair double-strand breaks in DNA during mitosis. MMEJ is an error-prone repair pathway that produces deletions of sequences from the strand being repaired and promotes genomic rearrangements, such as telomere fusions, some of them leading to cellular transformation. MMEJ is required during mitosis to repair persistent double-strand breaks that originate in S-phase. Although error-prone, MMEJ protects against chromosomal instability and tumorigenesis. The polymerase acts by binding directly the 2 ends of resected double-strand breaks, allowing microhomologous sequences in the overhangs to form base pairs. It then extends each strand from the base-paired region using the opposing overhang as a template. Requires partially resected DNA containing 2 to 6 base pairs of microhomology to perform MMEJ. The polymerase lacks proofreading activity and is highly promiscuous: unlike most polymerases, promotes extension of ssDNA and partial ssDNA (pssDNA) substrates. When the ends of a break do not contain terminal microhomology must identify embedded complementary sequences through a scanning step. Also acts as a DNA helicase, promoting dissociation of the replication protein A complex (RPA/RP-A), composed of RPA1, RPA2 and RPA3, from resected double-strand breaks to allow their annealing and subsequent joining by MMEJ. Removal of RPA/RP-A complex proteins prevents RAD51 accumulation at resected ends, thereby inhibiting homology-recombination repair (HR) pathway. Also shows RNA-directed DNA polymerase activity to mediate DNA repair in vitro; however this activity needs additional evidence in vivo. May also have lyase activity. Involved in somatic hypermutation of immunoglobulin genes, a process that requires the activity of DNA polymerases to ultimately introduce mutations at both A/T and C/G base pairs. However, POLQ does not play a major role in somatic hypermutation. POLQ-mediated end joining activity is involved in random integration of exogenous DNA hampers. The sequence is that of DNA polymerase theta from Mus musculus (Mouse).